Consider the following 21-residue polypeptide: Large ribosomal subunit protein uL29 (21 aa).

This sequence belongs to the universal ribosomal protein uL29 family.

In Brevundimonas diminuta (Pseudomonas diminuta), this protein is Large ribosomal subunit protein uL29 (rpmC).